We begin with the raw amino-acid sequence, 450 residues long: Phosphoglucosamine mutase (450 aa).

The active-site Phosphoserine intermediate is the Ser102. Mg(2+) is bound by residues Ser102, Asp244, Asp246, and Asp248. Phosphoserine is present on Ser102.

It belongs to the phosphohexose mutase family. The cofactor is Mg(2+). In terms of processing, activated by phosphorylation.

The catalysed reaction is alpha-D-glucosamine 1-phosphate = D-glucosamine 6-phosphate. Functionally, catalyzes the conversion of glucosamine-6-phosphate to glucosamine-1-phosphate. This Desulfovibrio desulfuricans (strain ATCC 27774 / DSM 6949 / MB) protein is Phosphoglucosamine mutase.